The sequence spans 398 residues: NADH-quinone oxidoreductase subunit D (398 aa).

It belongs to the complex I 49 kDa subunit family. In terms of assembly, NDH-1 is composed of 14 different subunits. Subunits NuoB, C, D, E, F, and G constitute the peripheral sector of the complex.

It localises to the cell inner membrane. It catalyses the reaction a quinone + NADH + 5 H(+)(in) = a quinol + NAD(+) + 4 H(+)(out). NDH-1 shuttles electrons from NADH, via FMN and iron-sulfur (Fe-S) centers, to quinones in the respiratory chain. The immediate electron acceptor for the enzyme in this species is believed to be ubiquinone. Couples the redox reaction to proton translocation (for every two electrons transferred, four hydrogen ions are translocated across the cytoplasmic membrane), and thus conserves the redox energy in a proton gradient. This chain is NADH-quinone oxidoreductase subunit D, found in Anaplasma marginale (strain St. Maries).